The following is a 309-amino-acid chain: Cytochrome c biogenesis protein CcsA (309 aa).

8 consecutive transmembrane segments (helical) span residues L18–F38, S43–F63, I73–L93, I102–L122, V148–I168, S216–N236, T250–I267, and L279–I299.

The protein belongs to the CcmF/CycK/Ccl1/NrfE/CcsA family. As to quaternary structure, may interact with ccs1.

It localises to the cellular thylakoid membrane. Its function is as follows. Required during biogenesis of c-type cytochromes (cytochrome c6 and cytochrome f) at the step of heme attachment. The sequence is that of Cytochrome c biogenesis protein CcsA from Prochlorococcus marinus (strain MIT 9301).